The following is an 86-amino-acid chain: Sulmotoxin 2 (86 aa).

A signal peptide spans 1 to 21; it reads MKTLLLALAVVAFMCLDSVYP. Intrachain disulfides connect cysteine 24–cysteine 47, cysteine 27–cysteine 35, cysteine 41–cysteine 62, cysteine 66–cysteine 77, and cysteine 78–cysteine 83.

It belongs to the three-finger toxin family. Ancestral subfamily. Boigatoxin sub-subfamily. Monomer. In terms of tissue distribution, expressed by the venom gland.

It is found in the secreted. In terms of biological role, probable neurotoxin. Is not toxic to mice and geckos. The protein is Sulmotoxin 2 of Spilotes sulphureus (Amazon puffing snake).